Here is a 69-residue protein sequence, read N- to C-terminus: Disintegrin EC6 subunit beta (69 aa).

Residues 1 to 65 (NSVHPCCDPV…DCPPNPWNGK (65 aa)) form the Disintegrin domain. Disulfide bonds link Cys6/Cys29, Cys20/Cys26, Cys25/Cys50, and Cys38/Cys57. A Cell attachment site motif is present at residues 42–44 (RGD).

It belongs to the venom metalloproteinase (M12B) family. P-II subfamily. P-IIe sub-subfamily. As to quaternary structure, heterodimer with subunit alpha; disulfide-linked. Expressed by the venom gland.

Its subcellular location is the secreted. Potently inhibits adhesion of alpha-4/beta-1 (ITGA4/ITGB1) and alpha-9/beta-1 (ITGA9/ITGB1) integrins to VCAM1, and adhesion of alpha-5/beta-1 (ITGA5/ITGB1) integrin to fibronectin. Has a much less effect on alpha-IIb/beta-3 (ITGA2B/ITGB3) integrin. Also potently inhibits neutrophil migration across TNF-alpha-activated human umbilical endothelial cells. The polypeptide is Disintegrin EC6 subunit beta (Echis carinatus sochureki (Saw-scaled viper)).